The sequence spans 480 residues: Cysteine--tRNA ligase (480 aa).

Position 31 (Cys31) interacts with Zn(2+). The 'HIGH' region motif lies at 33 to 43; that stretch reads PTVYDSSHIGH. Residues Cys211, His236, and Glu240 each contribute to the Zn(2+) site. A 'KMSKS' region motif is present at residues 269 to 273; the sequence is KMSKS. Lys272 provides a ligand contact to ATP.

This sequence belongs to the class-I aminoacyl-tRNA synthetase family. Requires Zn(2+) as cofactor.

The catalysed reaction is tRNA(Cys) + L-cysteine + ATP = L-cysteinyl-tRNA(Cys) + AMP + diphosphate. The protein is Cysteine--tRNA ligase of Encephalitozoon cuniculi (strain GB-M1) (Microsporidian parasite).